The sequence spans 262 residues: Acyl-[acyl-carrier-protein]--UDP-N-acetylglucosamine O-acyltransferase (262 aa).

This sequence belongs to the transferase hexapeptide repeat family. LpxA subfamily. As to quaternary structure, homotrimer.

The protein localises to the cytoplasm. It catalyses the reaction a (3R)-hydroxyacyl-[ACP] + UDP-N-acetyl-alpha-D-glucosamine = a UDP-3-O-[(3R)-3-hydroxyacyl]-N-acetyl-alpha-D-glucosamine + holo-[ACP]. It functions in the pathway glycolipid biosynthesis; lipid IV(A) biosynthesis; lipid IV(A) from (3R)-3-hydroxytetradecanoyl-[acyl-carrier-protein] and UDP-N-acetyl-alpha-D-glucosamine: step 1/6. Involved in the biosynthesis of lipid A, a phosphorylated glycolipid that anchors the lipopolysaccharide to the outer membrane of the cell. This is Acyl-[acyl-carrier-protein]--UDP-N-acetylglucosamine O-acyltransferase from Wigglesworthia glossinidia brevipalpis.